The primary structure comprises 81 residues: MKAFFVILGLALLCAYSFALEEQDQLSLRNDLLTVMFAENSELTPETEERYCQKWMWTCDEERKCCEGLVCRLWCKKKIEW.

The N-terminal stretch at methionine 1–alanine 19 is a signal peptide. A propeptide spanning residues leucine 20–arginine 50 is cleaved from the precursor. 3 cysteine pairs are disulfide-bonded: cysteine 52–cysteine 66, cysteine 59–cysteine 71, and cysteine 65–cysteine 75.

Belongs to the neurotoxin 30 (phrixotoxin) family. In terms of tissue distribution, expressed by the venom gland.

It localises to the secreted. Functionally, inhibits sodium channels Nav1.1/SCN1A (IC(50)=5.7 uM), Nav1.2/SCN2A (IC(50)=12 uM), Nav1.4/SCN4A (IC(50)=4 uM), Nav1.6/SCN8A (IC(50)=6.6 uM), Nav1.7/SCN9A (IC(50)=13.6-1030 nM), potassium channels Kv11.1/KCNH2 (IC(50)=4.7 uM), as well as high-voltage-gated calcium channels Cav1.2/CACNA1C (IC(50)= nM). Also blocks mechanosensitive ion channels (also named stretch-activated channels or SACs) and the hypotonic cell swelling induced calcium increase associated with the activation of such channels. It can thus be useful in treating cardiac ventricular disturbances. Also induces analgesia in mammals. The polypeptide is Kappa-theraphotoxin-Gr2c (Grammostola rosea (Chilean rose tarantula)).